The following is a 334-amino-acid chain: Holliday junction branch migration complex subunit RuvB (334 aa).

The segment at 4–186 (ADRLIAPISN…FGIVQRLEYY (183 aa)) is large ATPase domain (RuvB-L). ATP is bound by residues Ile25, Arg26, Gly67, Lys70, Thr71, Thr72, 133 to 135 (EDY), Arg176, Tyr186, and Arg223. Residue Thr71 coordinates Mg(2+). The tract at residues 187–257 (KVADLQHIVQ…TADRALNMLD (71 aa)) is small ATPAse domain (RuvB-S). The tract at residues 260-334 (HQGFDYMDRK…RAYLHFGIEK (75 aa)) is head domain (RuvB-H). Residues Arg315 and Arg320 each contribute to the DNA site.

It belongs to the RuvB family. As to quaternary structure, homohexamer. Forms an RuvA(8)-RuvB(12)-Holliday junction (HJ) complex. HJ DNA is sandwiched between 2 RuvA tetramers; dsDNA enters through RuvA and exits via RuvB. An RuvB hexamer assembles on each DNA strand where it exits the tetramer. Each RuvB hexamer is contacted by two RuvA subunits (via domain III) on 2 adjacent RuvB subunits; this complex drives branch migration. In the full resolvosome a probable DNA-RuvA(4)-RuvB(12)-RuvC(2) complex forms which resolves the HJ.

The protein localises to the cytoplasm. The enzyme catalyses ATP + H2O = ADP + phosphate + H(+). The RuvA-RuvB-RuvC complex processes Holliday junction (HJ) DNA during genetic recombination and DNA repair, while the RuvA-RuvB complex plays an important role in the rescue of blocked DNA replication forks via replication fork reversal (RFR). RuvA specifically binds to HJ cruciform DNA, conferring on it an open structure. The RuvB hexamer acts as an ATP-dependent pump, pulling dsDNA into and through the RuvAB complex. RuvB forms 2 homohexamers on either side of HJ DNA bound by 1 or 2 RuvA tetramers; 4 subunits per hexamer contact DNA at a time. Coordinated motions by a converter formed by DNA-disengaged RuvB subunits stimulates ATP hydrolysis and nucleotide exchange. Immobilization of the converter enables RuvB to convert the ATP-contained energy into a lever motion, pulling 2 nucleotides of DNA out of the RuvA tetramer per ATP hydrolyzed, thus driving DNA branch migration. The RuvB motors rotate together with the DNA substrate, which together with the progressing nucleotide cycle form the mechanistic basis for DNA recombination by continuous HJ branch migration. Branch migration allows RuvC to scan DNA until it finds its consensus sequence, where it cleaves and resolves cruciform DNA. This chain is Holliday junction branch migration complex subunit RuvB, found in Vibrio cholerae serotype O1 (strain ATCC 39541 / Classical Ogawa 395 / O395).